The primary structure comprises 228 residues: MSVSEIFVELQGFLAAEQDIREEIRKVVQSLEQTAREILTLLQGVHQGTGFQDIPKRCLKAREHFSTVKTHLTSLKTKFPAEQYYRFHEHWRFVLQRLVFLAAFVVYLETETLVTREAVTEILGIEPDREKGFHLDVEDYLSGVLILASELSRLSVNSVTAGDYSRPLHISTFINELDSGFRLLNLKNDSLRKRYDGLKYDVKKVEEVVYDLSIRGFNKETAAACGEK.

The tract at residues 86 to 90 (RFHEH) is DNA/RNA binding. Residues 177-198 (LDSGFRLLNLKNDSLRKRYDGL) are leucine-zipper. K187 carries the N6-acetyllysine modification. Residue S190 is modified to Phosphoserine. Position 199 is an N6-acetyllysine (K199).

This sequence belongs to the translin family. As to quaternary structure, ring-shaped heterooctamer of six TSN and two TSNAX subunits, DNA/RNA binding occurs inside the ring.

The protein localises to the cytoplasm. It is found in the nucleus. DNA-binding protein that specifically recognizes consensus sequences at the breakpoint junctions in chromosomal translocations, mostly involving immunoglobulin (Ig)/T-cell receptor gene segments. Seems to recognize single-stranded DNA ends generated by staggered breaks occurring at recombination hot spots. Functionally, exhibits both single-stranded and double-stranded endoribonuclease activity. May act as an activator of RNA-induced silencing complex (RISC) by facilitating endonucleolytic cleavage of the siRNA passenger strand. The chain is Translin (Tsn) from Mus musculus (Mouse).